The chain runs to 592 residues: UvrABC system protein C (592 aa).

The 78-residue stretch at 15–92 (ALPGCYLMKD…IQKHQPYFNI (78 aa)) folds into the GIY-YIG domain. Positions 197-232 (DNVKKDLTEKMATAAQEMQFERAAELRDQLRYIEAT) constitute a UVR domain.

This sequence belongs to the UvrC family. In terms of assembly, interacts with UvrB in an incision complex.

The protein resides in the cytoplasm. Functionally, the UvrABC repair system catalyzes the recognition and processing of DNA lesions. UvrC both incises the 5' and 3' sides of the lesion. The N-terminal half is responsible for the 3' incision and the C-terminal half is responsible for the 5' incision. The polypeptide is UvrABC system protein C (Latilactobacillus sakei subsp. sakei (strain 23K) (Lactobacillus sakei subsp. sakei)).